Reading from the N-terminus, the 1290-residue chain is Vacuolating cytotoxin autotransporter (1290 aa).

A signal peptide spans 1 to 33 (MEIQQTHRKINRPLVSLALVGALVSITPQQSHA). Positions 326–374 (PPEGGYKDKPKDKPSNTTQNNANNNQQNSAQNNSNTQVINPPNSAQKTE) are disordered. Residues 330-339 (GYKDKPKDKP) show a composition bias toward basic and acidic residues. Residues 340 to 362 (SNTTQNNANNNQQNSAQNNSNTQ) are compositionally biased toward low complexity. Residues 363 to 374 (VINPPNSAQKTE) are compositionally biased toward polar residues. Residues 1018 to 1290 (KYEKPTNVWA…ASNLGMRYSF (273 aa)) form the Autotransporter domain.

It localises to the periplasm. The protein localises to the secreted. The protein resides in the cell surface. Its subcellular location is the cell outer membrane. In terms of biological role, induces vacuolation of eukaryotic cells. Causes ulceration and gastric lesions. The polypeptide is Vacuolating cytotoxin autotransporter (vacA) (Helicobacter pylori (strain ATCC 700392 / 26695) (Campylobacter pylori)).